The following is a 61-amino-acid chain: Probradykinin-1 (61 aa).

Residues 1 to 22 (MSFLKKSLFLVLFLGLVSFSIC) form the signal peptide. A propeptide spanning residues 23-48 (EEEKRETEEEENKDETEEQSEEKKRF) is cleaved from the precursor. The segment at 24-61 (EEKRETEEEENKDETEEQSEEKKRFEPVPPGFTPFRLT) is disordered. Acidic residues predominate over residues 30–42 (EEEENKDETEEQS).

The protein belongs to the frog skin active peptide (FSAP) family. Bradykinin-related peptide subfamily. Expressed by the skin glands.

The protein resides in the secreted. In terms of biological role, may produce in vitro relaxation of rat arterial smooth muscle and constriction of intestinal smooth muscle. May target bradykinin receptors (BDKRB). This chain is Probradykinin-1, found in Pithecopus azureus (Orange-legged monkey tree frog).